We begin with the raw amino-acid sequence, 207 residues long: Serotonin N-acetyltransferase (207 aa).

Position 31 is a phosphothreonine; by PKA (T31). Residues 35-194 (SEFRCLTPQD…SLTFMELQCS (160 aa)) enclose the N-acetyltransferase domain. A substrate-binding site is contributed by L124. Residues 124 to 126 (LAV) and 132 to 137 (QQGKGS) contribute to the acetyl-CoA site. M159 contributes to the substrate binding site. 168-170 (YEK) contacts acetyl-CoA. S205 carries the phosphoserine modification.

Belongs to the acetyltransferase family. AANAT subfamily. Monomer. Interacts with several 14-3-3 proteins, including YWHAB, YWHAE, YWHAG and YWHAZ, preferentially when phosphorylated at Thr-31. Phosphorylation on Ser-205 also allows binding to YWHAZ, but with lower affinity. The interaction with YWHAZ considerably increases affinity for arylalkylamines and acetyl-CoA and protects the enzyme from dephosphorylation and proteasomal degradation. It may also prevent thiol-dependent inactivation. In terms of processing, cAMP-dependent phosphorylation on both N-terminal Thr-31 and C-terminal Ser-205 regulates AANAT activity by promoting interaction with 14-3-3 proteins. In terms of tissue distribution, highly expressed in pineal gland and retina. Also detected in heart and intestine.

The protein localises to the cytoplasm. The catalysed reaction is a 2-arylethylamine + acetyl-CoA = an N-acetyl-2-arylethylamine + CoA + H(+). It functions in the pathway aromatic compound metabolism; melatonin biosynthesis; melatonin from serotonin: step 1/2. Functionally, controls the night/day rhythm of melatonin production in the pineal gland. Catalyzes the N-acetylation of serotonin into N-acetylserotonin, the penultimate step in the synthesis of melatonin. The sequence is that of Serotonin N-acetyltransferase (AANAT) from Mesocricetus auratus (Golden hamster).